Here is a 576-residue protein sequence, read N- to C-terminus: Lysine--tRNA ligase (576 aa).

The Mg(2+) site is built by Glu-412 and Glu-419.

The protein belongs to the class-II aminoacyl-tRNA synthetase family. In terms of assembly, homodimer. Mg(2+) serves as cofactor.

It is found in the cytoplasm. The catalysed reaction is tRNA(Lys) + L-lysine + ATP = L-lysyl-tRNA(Lys) + AMP + diphosphate. This chain is Lysine--tRNA ligase, found in Parabacteroides distasonis (strain ATCC 8503 / DSM 20701 / CIP 104284 / JCM 5825 / NCTC 11152).